A 141-amino-acid chain; its full sequence is Putative nickel-responsive regulator (141 aa).

Ni(2+) is bound by residues H80, H91, H93, and C99.

This sequence belongs to the transcriptional regulatory CopG/NikR family. Ni(2+) is required as a cofactor.

Functionally, transcriptional regulator. This is Putative nickel-responsive regulator from Methanococcus maripaludis (strain C7 / ATCC BAA-1331).